Reading from the N-terminus, the 287-residue chain is 23S rRNA (uridine(2479)-2'-O)-methyltransferase (287 aa).

S-adenosyl-L-methionine is bound by residues 210–211, Gly232, and 252–254; these read TD and IPM.

The protein belongs to the class IV-like SAM-binding methyltransferase superfamily. RNA methyltransferase TsnR/AvirB family. Homodimer.

The catalysed reaction is uridine(2479) in 23S rRNA + S-adenosyl-L-methionine = 2'-O-methyluridine(2479) in 23S rRNA + S-adenosyl-L-homocysteine + H(+). Specifically methylates the 2'-O-ribose position of uridine-2479 in 23S ribosomal RNA. Confers resistance to antibiotic avilamycin, an orthosomycin antibiotic. This chain is 23S rRNA (uridine(2479)-2'-O)-methyltransferase (aviRb), found in Streptomyces viridochromogenes.